A 230-amino-acid chain; its full sequence is Large ribosomal subunit protein uL1 (230 aa).

It belongs to the universal ribosomal protein uL1 family. In terms of assembly, part of the 50S ribosomal subunit.

Its function is as follows. Binds directly to 23S rRNA. The L1 stalk is quite mobile in the ribosome, and is involved in E site tRNA release. Functionally, protein L1 is also a translational repressor protein, it controls the translation of the L11 operon by binding to its mRNA. In Lactobacillus johnsonii (strain CNCM I-12250 / La1 / NCC 533), this protein is Large ribosomal subunit protein uL1.